The chain runs to 315 residues: Calumenin-A (315 aa).

A signal peptide spans 1–19 (MEIRPLLMCFALCVVYATS). EF-hand domains are found at residues 68–103 (ESKRRLGVIVEKIDGDSDGFVTEVELRAWIKKAQKK), 104–139 (YIYENVDRQWKDFDVNNDGMISWEEYRNVTYGTYLD), 151–186 (HMMARDERRFKMADQNRDQIANKEEFTAFLHPEEYD), 188–223 (MKDIVVLETMEDIDKNGDGFIDLNEYIGDMYNHEDE), 229–264 (WVATEREQFSEFRDKNKDGKMDREETMDWILPSDYD), and 265–300 (HAEAEAKHLVYESDSNKDGKLSKEEILNKYDLFVGS). D81, D83, D85, E92, D117, N119, D121, M123, and E128 together coordinate Ca(2+). An N-linked (GlcNAc...) asparagine glycan is attached at N131. D164, N166, D168, E175, D201, N203, D205, E212, D242, N244, D246, K248, E253, D278, N280, D282, K284, and E289 together coordinate Ca(2+). The short motif at 312–315 (HDEF) is the Prevents secretion from ER element.

Belongs to the CREC family. In terms of assembly, interacts with ggcx.

It localises to the endoplasmic reticulum membrane. Its subcellular location is the golgi apparatus. It is found in the secreted. The protein localises to the melanosome. The protein resides in the sarcoplasmic reticulum lumen. In terms of biological role, involved in regulation of vitamin K-dependent carboxylation of multiple N-terminal glutamate residues. Seems to inhibit gamma-carboxylase ggcx. Binds 7 calcium ions with a low affinity. In Salmo salar (Atlantic salmon), this protein is Calumenin-A (calua).